Consider the following 126-residue polypeptide: Muscarinic acetylcholine receptor M4 (126 aa).

Residues 1–90 form a disordered region; it reads MKQSVKKPPP…LQPRTLNPAS (90 aa). Residues 1 to 126 lie on the Cytoplasmic side of the membrane; it reads MKQSVKKPPP…PAGMRPAANV (126 aa). Positions 28 to 39 are enriched in pro residues; the sequence is APPPVLPPPPRP. Residues 47–57 are compositionally biased toward polar residues; it reads NESSSGSATQN. Low complexity predominate over residues 64–75; sequence TELSTTEATTPA.

It belongs to the G-protein coupled receptor 1 family. Muscarinic acetylcholine receptor subfamily. CHRM4 sub-subfamily.

Its subcellular location is the cell membrane. It is found in the postsynaptic cell membrane. Functionally, the muscarinic acetylcholine receptor mediates various cellular responses, including inhibition of adenylate cyclase, breakdown of phosphoinositides and modulation of potassium channels through the action of G proteins. Primary transducing effect is inhibition of adenylate cyclase. May couple to multiple functional responses in cell lines. The protein is Muscarinic acetylcholine receptor M4 (CHRM4) of Bos taurus (Bovine).